We begin with the raw amino-acid sequence, 323 residues long: MDTLRIAVNGVSYNEASEIYKPHADPFTGPITNLAPWNFAVLATLMFVITSLSLFENFTVMLATYKFKQLRQPLNYIIVNLSLADFLVSLTGGTISFLTNARGYFFLGNWACVLEGFAVTYFGIVAMWSLAVLSFERYFVICRPLGNVRLRGKHAALGLLFVWTFSFIWTIPPVFGWCSYTVSKIGTTCEPNWYSNNIWNHTYIITFFVTCFIMPLGMIIYCYGKLLQKLRKVSHDRLGNAKKPERQVSRMVVVMIVAYLVGWTPYAAFSIIVTACPTIYLDPRLAAAPAFFSKTAAVYNPVIYVFMNKQVSTQLNWGFWSRA.

Residues 1 to 38 (MDTLRIAVNGVSYNEASEIYKPHADPFTGPITNLAPWN) lie on the Extracellular side of the membrane. A helical transmembrane segment spans residues 39 to 63 (FAVLATLMFVITSLSLFENFTVMLA). At 64–75 (TYKFKQLRQPLN) the chain is on the cytoplasmic side. A helical transmembrane segment spans residues 76 to 100 (YIIVNLSLADFLVSLTGGTISFLTN). Topologically, residues 101–115 (ARGYFFLGNWACVLE) are extracellular. An intrachain disulfide couples Cys112 to Cys189. A helical membrane pass occupies residues 116–135 (GFAVTYFGIVAMWSLAVLSF). Over 136-154 (ERYFVICRPLGNVRLRGKH) the chain is Cytoplasmic. The helical transmembrane segment at 155 to 178 (AALGLLFVWTFSFIWTIPPVFGWC) threads the bilayer. The Extracellular segment spans residues 179-202 (SYTVSKIGTTCEPNWYSNNIWNHT). N-linked (GlcNAc...) asparagine glycosylation is present at Asn200. Residues 203 to 230 (YIITFFVTCFIMPLGMIIYCYGKLLQKL) form a helical membrane-spanning segment. Residues 231 to 250 (RKVSHDRLGNAKKPERQVSR) lie on the Cytoplasmic side of the membrane. The helical transmembrane segment at 251-274 (MVVVMIVAYLVGWTPYAAFSIIVT) threads the bilayer. Residues 275 to 282 (ACPTIYLD) are Extracellular-facing. The helical transmembrane segment at 283–307 (PRLAAAPAFFSKTAAVYNPVIYVFM) threads the bilayer. Position 294 is an N6-(retinylidene)lysine (Lys294). Residues 308-323 (NKQVSTQLNWGFWSRA) are Cytoplasmic-facing.

This sequence belongs to the G-protein coupled receptor 1 family. Opsin subfamily. In terms of processing, phosphorylated on some or all of the serine and threonine residues present in the C-terminal region.

Its subcellular location is the membrane. The polypeptide is Vertebrate ancient opsin (Salmo salar (Atlantic salmon)).